Here is a 1605-residue protein sequence, read N- to C-terminus: Pentafunctional AROM polypeptide (1605 aa).

A 3-dehydroquinate synthase region spans residues 1–384 (MTGPTKISIL…YEPRASVVPN (384 aa)). NAD(+) contacts are provided by residues 44-46 (DTN), 81-84 (EVSK), 114-116 (GGV), and Asp-119. Arg-130 provides a ligand contact to 7-phospho-2-dehydro-3-deoxy-D-arabino-heptonate. Residue 139-140 (TT) participates in NAD(+) binding. 7-phospho-2-dehydro-3-deoxy-D-arabino-heptonate is bound by residues Asp-146 and Lys-152. Lys-161 is a binding site for NAD(+). Asn-162 contacts 7-phospho-2-dehydro-3-deoxy-D-arabino-heptonate. NAD(+)-binding positions include 179-182 (FLET) and Asn-190. Position 194 (Glu-194) interacts with Zn(2+). 7-phospho-2-dehydro-3-deoxy-D-arabino-heptonate contacts are provided by residues 194-197 (EVIK) and Lys-250. Glu-260 acts as the Proton acceptor; for 3-dehydroquinate synthase activity in catalysis. Residues 264-268 (RNLLN) and His-271 each bind 7-phospho-2-dehydro-3-deoxy-D-arabino-heptonate. His-271 contacts Zn(2+). The active-site Proton acceptor; for 3-dehydroquinate synthase activity is His-275. 2 residues coordinate 7-phospho-2-dehydro-3-deoxy-D-arabino-heptonate: His-287 and Lys-356. Zn(2+) is bound at residue His-287. The segment at 397 to 842 (VHPGVSTTSE…WDTLRQKFAV (446 aa)) is EPSP synthase. The active-site For EPSP synthase activity is Cys-824. Residues 864 to 1055 (SASVFIIGMR…KKKQHSFFVS (192 aa)) are shikimate kinase. 871–878 (GMRGAGKT) is a binding site for ATP. Positions 1056-1276 (LTLPDVRGAD…AAPGQLSATD (221 aa)) are 3-dehydroquinase. The active-site Proton acceptor; for 3-dehydroquinate dehydratase activity is the His-1179. Lys-1207 functions as the Schiff-base intermediate with substrate; for 3-dehydroquinate dehydratase activity in the catalytic mechanism. Residues 1289–1605 (KKRFALFGSP…LSGRTMLTCS (317 aa)) form a shikimate dehydrogenase region.

It in the N-terminal section; belongs to the sugar phosphate cyclases superfamily. Dehydroquinate synthase family. The protein in the 2nd section; belongs to the EPSP synthase family. In the 3rd section; belongs to the shikimate kinase family. This sequence in the 4th section; belongs to the type-I 3-dehydroquinase family. It in the C-terminal section; belongs to the shikimate dehydrogenase family. Homodimer. It depends on Zn(2+) as a cofactor.

It localises to the cytoplasm. It catalyses the reaction 7-phospho-2-dehydro-3-deoxy-D-arabino-heptonate = 3-dehydroquinate + phosphate. The catalysed reaction is 3-dehydroquinate = 3-dehydroshikimate + H2O. The enzyme catalyses shikimate + NADP(+) = 3-dehydroshikimate + NADPH + H(+). It carries out the reaction shikimate + ATP = 3-phosphoshikimate + ADP + H(+). It catalyses the reaction 3-phosphoshikimate + phosphoenolpyruvate = 5-O-(1-carboxyvinyl)-3-phosphoshikimate + phosphate. It participates in metabolic intermediate biosynthesis; chorismate biosynthesis; chorismate from D-erythrose 4-phosphate and phosphoenolpyruvate: step 2/7. Its pathway is metabolic intermediate biosynthesis; chorismate biosynthesis; chorismate from D-erythrose 4-phosphate and phosphoenolpyruvate: step 3/7. It functions in the pathway metabolic intermediate biosynthesis; chorismate biosynthesis; chorismate from D-erythrose 4-phosphate and phosphoenolpyruvate: step 4/7. The protein operates within metabolic intermediate biosynthesis; chorismate biosynthesis; chorismate from D-erythrose 4-phosphate and phosphoenolpyruvate: step 5/7. It participates in metabolic intermediate biosynthesis; chorismate biosynthesis; chorismate from D-erythrose 4-phosphate and phosphoenolpyruvate: step 6/7. Functionally, the AROM polypeptide catalyzes 5 consecutive enzymatic reactions in prechorismate polyaromatic amino acid biosynthesis. This is Pentafunctional AROM polypeptide from Aspergillus fumigatus (strain CBS 144.89 / FGSC A1163 / CEA10) (Neosartorya fumigata).